Here is a 274-residue protein sequence, read N- to C-terminus: tRNA-cytidine(32) 2-sulfurtransferase (274 aa).

A PP-loop motif motif is present at residues 40–45; sequence SGGKDS. Residues Cys115, Cys118, and Cys206 each coordinate [4Fe-4S] cluster.

It belongs to the TtcA family. As to quaternary structure, homodimer. The cofactor is Mg(2+). [4Fe-4S] cluster is required as a cofactor.

Its subcellular location is the cytoplasm. The catalysed reaction is cytidine(32) in tRNA + S-sulfanyl-L-cysteinyl-[cysteine desulfurase] + AH2 + ATP = 2-thiocytidine(32) in tRNA + L-cysteinyl-[cysteine desulfurase] + A + AMP + diphosphate + H(+). Its pathway is tRNA modification. Its function is as follows. Catalyzes the ATP-dependent 2-thiolation of cytidine in position 32 of tRNA, to form 2-thiocytidine (s(2)C32). The sulfur atoms are provided by the cysteine/cysteine desulfurase (IscS) system. The sequence is that of tRNA-cytidine(32) 2-sulfurtransferase from Azotobacter vinelandii (strain DJ / ATCC BAA-1303).